A 510-amino-acid polypeptide reads, in one-letter code: MKLAYWMYAGPAHIGTLRVATSFKNVHAIMHAPLGDDYFNVMRSMLERERDFTPVTTSIVDRHVLARGSQEKVVENITRKDKEELPDLILLTPTCTSSILQEDLQNFVDRAAMESKSDVLLADVNHYRVNELQAADRTLEQIVRFYIEKAQKQNNLSTTKTIKPSVNILGMFTLGFHNQHDCRELKILLNQLGITVNEVIPEGGSVLNLKNLPKAWFNIVPYREVGLMTAVYLEKEFQMPYVDITPMGIVQTESFIRQIANVLNSIDKTNSYNFDQYIDQQTIYVSQAAWFARSIDCQNLTNKKAVVFGDATHAVAMTKILVREMGIRVACAGTYCQHDADWFREQVWGFCDEVLITDDHTQVGDMIARIEPSAIFGTQMERHVGKRLDIPCGVISAPVHIQNFPLGYRPFLGYEGTNQIADLVYNSFTLGMEDHLLEIFGGHDSKEVITKSLSTDSELNWTIEATSELNKIPGFVRGKVKRNTEKFARQNKIITISIDVMYAAKESAGA.

Aspartate 36 provides a ligand contact to [4Fe-4S] cluster. Residue aspartate 296 is the Proton donor of the active site. 431-432 is a binding site for substrate; it reads GM.

The protein belongs to the ChlB/BchB/BchZ family. Protochlorophyllide reductase is composed of three subunits; ChlL, ChlN and ChlB. Forms a heterotetramer of two ChlB and two ChlN subunits. [4Fe-4S] cluster is required as a cofactor.

Its subcellular location is the plastid. The protein localises to the chloroplast. The enzyme catalyses chlorophyllide a + oxidized 2[4Fe-4S]-[ferredoxin] + 2 ADP + 2 phosphate = protochlorophyllide a + reduced 2[4Fe-4S]-[ferredoxin] + 2 ATP + 2 H2O. It participates in porphyrin-containing compound metabolism; chlorophyll biosynthesis (light-independent). In terms of biological role, component of the dark-operative protochlorophyllide reductase (DPOR) that uses Mg-ATP and reduced ferredoxin to reduce ring D of protochlorophyllide (Pchlide) to form chlorophyllide a (Chlide). This reaction is light-independent. The NB-protein (ChlN-ChlB) is the catalytic component of the complex. The chain is Light-independent protochlorophyllide reductase subunit B from Stigeoclonium helveticum (Green alga).